Consider the following 717-residue polypeptide: Methionine--tRNA ligase (717 aa).

Residues 19–29 carry the 'HIGH' region motif; sequence PYANGDLHVGH. Residues Cys-150, Cys-153, Cys-162, and Cys-166 each coordinate Zn(2+). The short motif at 356–360 is the 'KMSKS' region element; the sequence is ALSTS. Thr-359 contributes to the ATP binding site. Positions 573 to 603 are disordered; it reads ERVEEASEASAEASNEGGEAAGDEVDDGDVD. Over residues 580-590 the composition is skewed to low complexity; it reads EASAEASNEGG. Over residues 593–603 the composition is skewed to acidic residues; the sequence is AGDEVDDGDVD. The region spanning 619 to 717 is the tRNA-binding domain; it reads DFEGVDMRVG…EDAPLGTRIK (99 aa).

Belongs to the class-I aminoacyl-tRNA synthetase family. MetG type 1 subfamily. Homodimer. The cofactor is Zn(2+).

It localises to the cytoplasm. The enzyme catalyses tRNA(Met) + L-methionine + ATP = L-methionyl-tRNA(Met) + AMP + diphosphate. Functionally, is required not only for elongation of protein synthesis but also for the initiation of all mRNA translation through initiator tRNA(fMet) aminoacylation. This Haloarcula marismortui (strain ATCC 43049 / DSM 3752 / JCM 8966 / VKM B-1809) (Halobacterium marismortui) protein is Methionine--tRNA ligase.